The chain runs to 367 residues: Germination protease (367 aa).

A propeptide spanning residues 1-15 (MKEPLDLSKYSVRTD) is cleaved from the precursor.

The protein belongs to the peptidase A25 family. Homotetramer. Autoproteolytically processed. The inactive tetrameric zymogen termed p46 autoprocesses to a smaller form termed p41, which is active only during spore germination.

The enzyme catalyses Endopeptidase action with P4 Glu or Asp, P1 preferably Glu &gt; Asp, P1' hydrophobic and P2' Ala.. Functionally, initiates the rapid degradation of small, acid-soluble proteins during spore germination. This is Germination protease from Bacillus cereus (strain ATCC 10987 / NRS 248).